A 283-amino-acid polypeptide reads, in one-letter code: Pyridoxal kinase PdxY (283 aa).

Ser8 contributes to the substrate binding site. ATP is bound by residues Asp110 and Glu147. Asp219 provides a ligand contact to substrate.

Belongs to the pyridoxine kinase family. PdxY subfamily. As to quaternary structure, homodimer. Mg(2+) serves as cofactor.

It carries out the reaction pyridoxal + ATP = pyridoxal 5'-phosphate + ADP + H(+). Its pathway is cofactor metabolism; pyridoxal 5'-phosphate salvage; pyridoxal 5'-phosphate from pyridoxal: step 1/1. Pyridoxal kinase involved in the salvage pathway of pyridoxal 5'-phosphate (PLP). Catalyzes the phosphorylation of pyridoxal to PLP. In Corynebacterium diphtheriae (strain ATCC 700971 / NCTC 13129 / Biotype gravis), this protein is Pyridoxal kinase PdxY.